The following is a 100-amino-acid chain: Protein alpha-2 (100 aa).

The chain is Protein alpha-2 from Bos taurus (Bovine).